The chain runs to 425 residues: Adenylosuccinate synthetase (425 aa).

GTP contacts are provided by residues 12-18 (GDEGKGK) and 40-42 (GHT). The active-site Proton acceptor is the Asp13. Positions 13 and 40 each coordinate Mg(2+). IMP is bound by residues 13–16 (DEGK), 38–41 (NAGH), Thr130, Arg144, Gln225, Thr240, and Arg304. His41 serves as the catalytic Proton donor. Position 300–306 (300–306 (ATTGRPR)) interacts with substrate. Residues Arg306, 332-334 (KLD), and 414-416 (SVG) each bind GTP.

The protein belongs to the adenylosuccinate synthetase family. As to quaternary structure, homodimer. Mg(2+) serves as cofactor.

It localises to the cytoplasm. The catalysed reaction is IMP + L-aspartate + GTP = N(6)-(1,2-dicarboxyethyl)-AMP + GDP + phosphate + 2 H(+). It functions in the pathway purine metabolism; AMP biosynthesis via de novo pathway; AMP from IMP: step 1/2. Functionally, plays an important role in the de novo pathway of purine nucleotide biosynthesis. Catalyzes the first committed step in the biosynthesis of AMP from IMP. In Desulfovibrio desulfuricans (strain ATCC 27774 / DSM 6949 / MB), this protein is Adenylosuccinate synthetase.